The primary structure comprises 512 residues: Acid-sensing ion channel 2 (512 aa).

The Cytoplasmic segment spans residues 1-37 (MDLKESPSEGSLQPSSIQIFANTSTLHGIRHIFVYGP). Ser8 and Ser11 each carry phosphoserine. A helical transmembrane segment spans residues 38 to 58 (LTIRRVLWAVAFVGSLGLLLV). Topologically, residues 59–427 (ESSERVSYYF…EQKKAYEVAA (369 aa)) are extracellular. 6 cysteine pairs are disulfide-bonded: Cys92-Cys193, Cys289-Cys364, Cys307-Cys360, Cys311-Cys358, Cys320-Cys342, and Cys322-Cys334. 2 N-linked (GlcNAc...) asparagine glycosylation sites follow: Asn365 and Asn392. A helical membrane pass occupies residues 428–448 (LLGDIGGQMGLFIGASLLTIL). A GAS motif; ion selectivity filter motif is present at residues 441–443 (GAS). Residues 449-512 (ELFDYIYELI…ALGTLEEIAC (64 aa)) are Cytoplasmic-facing.

It belongs to the amiloride-sensitive sodium channel (TC 1.A.6) family. ASIC2 subfamily. As to quaternary structure, can form homotrimers. Heterotrimer; forms functional heterotrimers producing channel with different properties. Forms heterotrimers with ASIC1; while ASIC1 determines current amplitude, ASIC2 influences the properties of the current. Forms heterotrimers with ASIC3; resulting in channels with distinct properties. Interacts with STOM; STOM regulates the gating of ASIC2-containing channels. Interacts with PICK1; promotes ASIC3 phosphorylation by PKC and activation of ASIC2/ASIC3 heterotrimers. Expressed in sciatic nerve and dorsal root ganglion (DRG) (at protein level). Both isoforms display the same expression pattern except in DRG where isoform 2 is more abundantly expressed. Widely distributed throughout the brain. Highly expressed in the main olfactory bulb, neo- and allo-cortical regions, hippocampal formation, habenula, basolateral amygdaloid nuclei, and cerebellum. In the olfactory system, expressed in the glomerular cell layer, the internal granular layer, and the mitral and internal plexiform cell layers. Within the glomerular layer, restricted to the periglomerular cells. In the neocortex, strongly expressed in the large pyramidal neurons in all cortical layers as well as in the oligo-, astro-, or micro-glia cells. In the hippocampal formation, expressed in dentate granule cells and hilar neurons, as well as in pyramidal cells of CA1-CA3 subfields. Expressed in stratum oriens and radiatum of all subfields. Within the thalamus, expressed moderately in the medial and lateral habenula. In the cerebellar cortex expressed in Purkinje cells and granule cells. Expressed at low levels in choroid plexus.

The protein resides in the cell membrane. The catalysed reaction is Na(+)(in) = Na(+)(out). It carries out the reaction K(+)(in) = K(+)(out). The enzyme catalyses Li(+)(in) = Li(+)(out). Inhibited by the diuretic drug amiloride. Inhibited by gadolinium ions, the heterotrimer with ASIC3 being more sensitive. Zn(2+) potentiates the acid activation of ASIC2-containing homomeric and heteromeric channels. The snake venom mambalgin-1 and mambalgin-2 inhibit the homotrimers composed of ASIC1 and ASIC2 and have strong analgesic effects. Forms pH-gated trimeric sodium channels that act as postsynaptic excitatory sensors in the nervous system. Upon extracellular acidification, these channels generate rapid, transient inward currents that fully desensitize. Highly selective for sodium, they are permeable to other cations. By forming heterotrimeric channels with ASIC1, could contribute to synaptic plasticity, learning, and memory. Additionally, as acid sensors at nerve terminals, plays a role in mechanosensation and phototransduction. Its function is as follows. Has no pH-gated sodium channel activity per se but can associate with other ASICs to produce functional channels with specific properties. This is Acid-sensing ion channel 2 from Rattus norvegicus (Rat).